A 359-amino-acid polypeptide reads, in one-letter code: Alanine racemase, biosynthetic (359 aa).

The Proton acceptor; specific for D-alanine role is filled by lysine 34. Lysine 34 carries the N6-(pyridoxal phosphate)lysine modification. Arginine 129 is a substrate binding site. The Proton acceptor; specific for L-alanine role is filled by tyrosine 255. Residue methionine 303 coordinates substrate.

It belongs to the alanine racemase family. As to quaternary structure, monomer but homodimer in the presence of the substrate. It depends on pyridoxal 5'-phosphate as a cofactor.

It catalyses the reaction L-alanine = D-alanine. It participates in amino-acid biosynthesis; D-alanine biosynthesis; D-alanine from L-alanine: step 1/1. Its pathway is cell wall biogenesis; peptidoglycan biosynthesis. Catalyzes the interconversion of L-alanine and D-alanine. The sequence is that of Alanine racemase, biosynthetic (alr) from Shigella sonnei.